The following is a 435-amino-acid chain: Putative FBD-associated F-box protein At5g56820 (435 aa).

The F-box domain maps to 14 to 60 (SDRISYLPDDLLLRILSFIHTSDAISTSLLSKRWKFVWKMMPTLDLD). In terms of domain architecture, FBD spans 341 to 390 (VRKPNSVPECLTFHLETLEWQGYAGRPEDKEIAVYILGNALRLNTATISR).

This Arabidopsis thaliana (Mouse-ear cress) protein is Putative FBD-associated F-box protein At5g56820.